The chain runs to 92 residues: Small ribosomal subunit protein uS17 (92 aa).

The protein belongs to the universal ribosomal protein uS17 family. Part of the 30S ribosomal subunit.

Its function is as follows. One of the primary rRNA binding proteins, it binds specifically to the 5'-end of 16S ribosomal RNA. This chain is Small ribosomal subunit protein uS17, found in Cupriavidus pinatubonensis (strain JMP 134 / LMG 1197) (Cupriavidus necator (strain JMP 134)).